We begin with the raw amino-acid sequence, 183 residues long: CASP-like protein UU2 (183 aa).

At 1-33 (MEESQQQSSKFDAPPSPYVPSRVYLAQIYWKKP) the chain is on the cytoplasmic side. A helical transmembrane segment spans residues 34 to 54 (AIVVLRVLQFIFSLIAFSVMA). Topologically, residues 55 to 72 (DVLHDVQGSIKSLSYTVA) are extracellular. Residues 73–93 (IGVLACAYALAQLSFSLWCVI) traverse the membrane as a helical segment. The Cytoplasmic segment spans residues 94–118 (RGATSSAGVTPLYQYATFICDQMST). A helical transmembrane segment spans residues 119–139 (YFLISAASATATLIDVSGVCG). Topologically, residues 140-156 (SNGSGTNLCSRSTASVT) are extracellular. N141 carries an N-linked (GlcNAc...) asparagine glycan. Residues 157-177 (FAFLAFLAFSASSVLTGYYLV) form a helical membrane-spanning segment. The Cytoplasmic portion of the chain corresponds to 178 to 183 (KCILKA).

This sequence belongs to the Casparian strip membrane proteins (CASP) family. As to quaternary structure, homodimer and heterodimers.

The protein localises to the cell membrane. This is CASP-like protein UU2 from Selaginella moellendorffii (Spikemoss).